The following is a 60-amino-acid chain: Large ribosomal subunit protein uL30 (60 aa).

The protein belongs to the universal ribosomal protein uL30 family. Part of the 50S ribosomal subunit.

This chain is Large ribosomal subunit protein uL30, found in Oceanobacillus iheyensis (strain DSM 14371 / CIP 107618 / JCM 11309 / KCTC 3954 / HTE831).